A 577-amino-acid polypeptide reads, in one-letter code: 2-hydroxyacyl-CoA lyase (577 aa).

E59 is a binding site for thiamine diphosphate. The thiamine pyrophosphate binding stretch occupies residues 412-493 (TMDVGRAVLV…VIVFNNNGVY (82 aa)). Residues D462 and N489 each coordinate Mg(2+).

This sequence belongs to the TPP enzyme family. Homotetramer. Mg(2+) is required as a cofactor. The cofactor is thiamine diphosphate.

It carries out the reaction an (R)-2-hydroxy-long-chain-fatty acyl-CoA = a long-chain fatty aldehyde + formyl-CoA. The catalysed reaction is a 2-hydroxy-3-methyl fatty acyl-CoA = a 2-methyl-branched fatty aldehyde + formyl-CoA. Catalyzes a carbon-carbon cleavage reaction; cleaves a 2-hydroxy-3-methylacyl-CoA into formyl-CoA and a 2-methyl-branched fatty aldehyde. This is 2-hydroxyacyl-CoA lyase from Oryza sativa subsp. japonica (Rice).